Consider the following 204-residue polypeptide: Salt stress root protein RS1 (204 aa).

The segment at 128-204 (FVPKEEPKPE…AAPAAEPEKQ (77 aa)) is disordered. The span at 147–161 (TSREVAVEEEKKEEE) shows a compositional bias: basic and acidic residues. Residues 164-180 (PAEPAAAAAEAAAPSTE) are compositionally biased toward low complexity. The segment covering 182-192 (VEEKKEEEKPA) has biased composition (basic and acidic residues). Over residues 193 to 204 (EAAAPAAEPEKQ) the composition is skewed to low complexity.

It belongs to the DREPP family.

The polypeptide is Salt stress root protein RS1 (Oryza sativa subsp. indica (Rice)).